A 201-amino-acid polypeptide reads, in one-letter code: Acireductone dioxygenase 2 (201 aa).

Fe(2+) contacts are provided by His83, His85, Glu89, and His129. The Ni(2+) site is built by His83, His85, Glu89, and His129.

The protein belongs to the acireductone dioxygenase (ARD) family. The cofactor is Fe(2+). Ni(2+) is required as a cofactor.

The protein resides in the cytoplasm. It is found in the nucleus. The catalysed reaction is 1,2-dihydroxy-5-(methylsulfanyl)pent-1-en-3-one + O2 = 4-methylsulfanyl-2-oxobutanoate + formate + 2 H(+). It catalyses the reaction 1,2-dihydroxy-5-(methylsulfanyl)pent-1-en-3-one + O2 = 3-(methylsulfanyl)propanoate + CO + formate + 2 H(+). Its pathway is amino-acid biosynthesis; L-methionine biosynthesis via salvage pathway; L-methionine from S-methyl-5-thio-alpha-D-ribose 1-phosphate: step 5/6. Functionally, catalyzes 2 different reactions between oxygen and the acireductone 1,2-dihydroxy-3-keto-5-methylthiopentene (DHK-MTPene) depending upon the metal bound in the active site. Fe-containing acireductone dioxygenase (Fe-ARD) produces formate and 2-keto-4-methylthiobutyrate (KMTB), the alpha-ketoacid precursor of methionine in the methionine recycle pathway. Ni-containing acireductone dioxygenase (Ni-ARD) produces methylthiopropionate, carbon monoxide and formate, and does not lie on the methionine recycle pathway. This Coprinopsis cinerea (strain Okayama-7 / 130 / ATCC MYA-4618 / FGSC 9003) (Inky cap fungus) protein is Acireductone dioxygenase 2.